A 475-amino-acid polypeptide reads, in one-letter code: Ribulose bisphosphate carboxylase large chain (475 aa).

Positions Met-1–Ser-2 are excised as a propeptide. Pro-3 bears the N-acetylproline mark. Lys-14 carries the N6,N6,N6-trimethyllysine modification. Residues Asn-123 and Thr-173 each coordinate substrate. Catalysis depends on Lys-175, which acts as the Proton acceptor. Residue Lys-177 coordinates substrate. Mg(2+) contacts are provided by Lys-201, Asp-203, and Glu-204. The residue at position 201 (Lys-201) is an N6-carboxylysine. His-294 acts as the Proton acceptor in catalysis. Positions 295, 327, and 379 each coordinate substrate.

The protein belongs to the RuBisCO large chain family. Type I subfamily. Heterohexadecamer of 8 large chains and 8 small chains; disulfide-linked. The disulfide link is formed within the large subunit homodimers. It depends on Mg(2+) as a cofactor. The disulfide bond which can form in the large chain dimeric partners within the hexadecamer appears to be associated with oxidative stress and protein turnover.

The protein resides in the plastid. The protein localises to the chloroplast. The enzyme catalyses 2 (2R)-3-phosphoglycerate + 2 H(+) = D-ribulose 1,5-bisphosphate + CO2 + H2O. The catalysed reaction is D-ribulose 1,5-bisphosphate + O2 = 2-phosphoglycolate + (2R)-3-phosphoglycerate + 2 H(+). RuBisCO catalyzes two reactions: the carboxylation of D-ribulose 1,5-bisphosphate, the primary event in carbon dioxide fixation, as well as the oxidative fragmentation of the pentose substrate in the photorespiration process. Both reactions occur simultaneously and in competition at the same active site. In Alnus incana (White alder), this protein is Ribulose bisphosphate carboxylase large chain.